A 330-amino-acid chain; its full sequence is Aspartate--ammonia ligase (330 aa).

The protein belongs to the class-II aminoacyl-tRNA synthetase family. AsnA subfamily.

It localises to the cytoplasm. The enzyme catalyses L-aspartate + NH4(+) + ATP = L-asparagine + AMP + diphosphate + H(+). It participates in amino-acid biosynthesis; L-asparagine biosynthesis; L-asparagine from L-aspartate (ammonia route): step 1/1. This Salmonella agona (strain SL483) protein is Aspartate--ammonia ligase.